The primary structure comprises 668 residues: MGGGVLKQQFVLHAPFLPCGDQPEAIRRLSQGITDGVPAQVLLGTTGSGKTFTMANVIANVNVPTLVLAHNKTLAAQLYQEFKAFFPENAVEYFISYYDYYQPEAYIARSDTYIEKSLLINDEIDKLRLSATRSILERRDTLIVSSISCIYGIGSPDNYSSMALTLEVGKEYPRSQLSSQLVRMHYQASSTPQRSAFRERGSVIDIFLAYESDLAVRLEFMNDTLISIEYVDPLTMIPSHTTSSITLYPGSHYVTPEAVREQAIRTIREELEQRMLFFEGRPVEQERLFQRTTHDIEMIKEIGFCKGIENYSRHFTGAAPGEPPTCLLDYFPDDFLLIIDESHQTLPQLRAMYRGDQSRKQSLVEYGFRLPSAFDNRPLTYEEARRYFHRVIYVSATPGDLEIQESRGHIIEQIIRPTGIPDPLPEIRPAKGQIDDLLEEIRQRLRKDQEKILVISVTKKLAEDIAAFLAELGIAATYLHSGIETAERTQILTDLRLGNIDVLIGVNLLREGIDLPEVSLVAILDADKEGFLRSSASLIQFCGRAARNIHGKVICYADRITPSMDHMLKETERRRKIQLDYNQQHKITPQPIIKPILANPITKEAGQEETRLKMQSSKELEASIKTYEEAMYQAAQEFQFDEAVKYRDLMNAAKKQLLFQKGEEENGD.

The 386-residue stretch at 31-416 folds into the Helicase ATP-binding domain; the sequence is QGITDGVPAQ…RGHIIEQIIR (386 aa). 44 to 51 lines the ATP pocket; that stretch reads GTTGSGKT. A Beta-hairpin motif is present at residues 97-120; sequence YYDYYQPEAYIARSDTYIEKSLLI. The 164-residue stretch at 433–596 folds into the Helicase C-terminal domain; that stretch reads QIDDLLEEIR…ITPQPIIKPI (164 aa). Residues 621–656 enclose the UVR domain; it reads EASIKTYEEAMYQAAQEFQFDEAVKYRDLMNAAKKQ.

The protein belongs to the UvrB family. In terms of assembly, forms a heterotetramer with UvrA during the search for lesions. Interacts with UvrC in an incision complex.

Its subcellular location is the cytoplasm. Its function is as follows. The UvrABC repair system catalyzes the recognition and processing of DNA lesions. A damage recognition complex composed of 2 UvrA and 2 UvrB subunits scans DNA for abnormalities. Upon binding of the UvrA(2)B(2) complex to a putative damaged site, the DNA wraps around one UvrB monomer. DNA wrap is dependent on ATP binding by UvrB and probably causes local melting of the DNA helix, facilitating insertion of UvrB beta-hairpin between the DNA strands. Then UvrB probes one DNA strand for the presence of a lesion. If a lesion is found the UvrA subunits dissociate and the UvrB-DNA preincision complex is formed. This complex is subsequently bound by UvrC and the second UvrB is released. If no lesion is found, the DNA wraps around the other UvrB subunit that will check the other stand for damage. This chain is UvrABC system protein B, found in Chlamydia trachomatis serovar A (strain ATCC VR-571B / DSM 19440 / HAR-13).